The sequence spans 349 residues: Phosphoribosylformylglycinamidine cyclo-ligase (349 aa).

Belongs to the AIR synthase family.

It localises to the cytoplasm. The catalysed reaction is 2-formamido-N(1)-(5-O-phospho-beta-D-ribosyl)acetamidine + ATP = 5-amino-1-(5-phospho-beta-D-ribosyl)imidazole + ADP + phosphate + H(+). It participates in purine metabolism; IMP biosynthesis via de novo pathway; 5-amino-1-(5-phospho-D-ribosyl)imidazole from N(2)-formyl-N(1)-(5-phospho-D-ribosyl)glycinamide: step 2/2. This Lactobacillus delbrueckii subsp. bulgaricus (strain ATCC 11842 / DSM 20081 / BCRC 10696 / JCM 1002 / NBRC 13953 / NCIMB 11778 / NCTC 12712 / WDCM 00102 / Lb 14) protein is Phosphoribosylformylglycinamidine cyclo-ligase.